The chain runs to 1254 residues: DNA-directed RNA polymerase subunit beta (1254 aa).

Belongs to the RNA polymerase beta chain family. The RNAP catalytic core consists of 2 alpha, 1 beta, 1 beta' and 1 omega subunit. When a sigma factor is associated with the core the holoenzyme is formed, which can initiate transcription.

The catalysed reaction is RNA(n) + a ribonucleoside 5'-triphosphate = RNA(n+1) + diphosphate. Functionally, DNA-dependent RNA polymerase catalyzes the transcription of DNA into RNA using the four ribonucleoside triphosphates as substrates. The sequence is that of DNA-directed RNA polymerase subunit beta from Protochlamydia amoebophila (strain UWE25).